The chain runs to 78 residues: Large ribosomal subunit protein eL20 (78 aa).

It belongs to the eukaryotic ribosomal protein eL20 family. Part of the 50S ribosomal subunit. Binds 23S rRNA.

This Pyrobaculum calidifontis (strain DSM 21063 / JCM 11548 / VA1) protein is Large ribosomal subunit protein eL20.